The primary structure comprises 51 residues: Insulin (51 aa).

3 disulfides stabilise this stretch: Cys-7-Cys-37, Cys-19-Cys-50, and Cys-36-Cys-41.

Belongs to the insulin family. As to quaternary structure, heterodimer of a B chain and an A chain linked by two disulfide bonds.

It is found in the secreted. Its function is as follows. Insulin decreases blood glucose concentration. It increases cell permeability to monosaccharides, amino acids and fatty acids. It accelerates glycolysis, the pentose phosphate cycle, and glycogen synthesis in liver. This chain is Insulin (INS), found in Capra hircus (Goat).